A 130-amino-acid polypeptide reads, in one-letter code: Cyclin-dependent kinase 4 inhibitor B (130 aa).

ANK repeat units lie at residues 5 to 34 (GSDA…DPNA), 38 to 66 (FGRR…EPNC), 71 to 100 (TLTR…RLDV), and 104 to 130 (WGRL…ATGD). T12 is subject to Phosphothreonine.

Belongs to the CDKN2 cyclin-dependent kinase inhibitor family. As to quaternary structure, heterodimer of CDKN2B with CDK4 or CDK6. Expression abundant in lung, less abundant in testis, barely detectable in liver, and not detectable in neonatal kidney, adult kidney, brain, heart, or spleen.

Interacts strongly with CDK4 and CDK6. Potent inhibitor. Potential effector of TGF-beta induced cell cycle arrest. The chain is Cyclin-dependent kinase 4 inhibitor B (Cdkn2b) from Rattus norvegicus (Rat).